The following is a 577-amino-acid chain: Adenine deaminase (577 aa).

Belongs to the metallo-dependent hydrolases superfamily. Adenine deaminase family. Mn(2+) serves as cofactor.

It carries out the reaction adenine + H2O + H(+) = hypoxanthine + NH4(+). In Kosmotoga olearia (strain ATCC BAA-1733 / DSM 21960 / TBF 19.5.1), this protein is Adenine deaminase.